The primary structure comprises 88 residues: Otospiralin (88 aa).

Positions 1 to 21 (MQACMVPGLALCLLLGSLTEA) are cleaved as a signal peptide.

It belongs to the otospiralin family. As to expression, ear specific.

The protein localises to the secreted. Its function is as follows. May be essential for the survival of the neurosensory epithelium of the inner ear. This Cavia porcellus (Guinea pig) protein is Otospiralin (OTOS).